The following is a 332-amino-acid chain: Caffeoylshikimate esterase (332 aa).

The span at 1 to 13 (MPSEAESSANSAP) shows a compositional bias: low complexity. The interval 1 to 26 (MPSEAESSANSAPATPPPPPNFWGTM) is disordered. The active-site Nucleophile is the serine 147. Residues aspartate 268 and histidine 298 each act as charge relay system in the active site.

It belongs to the AB hydrolase superfamily. Monoacylglycerol lipase family. As to quaternary structure, interacts with ACBP2. As to expression, expressed in vasculature of roots and leaves, stems, flowers and siliques.

The protein localises to the cell membrane. It carries out the reaction 5-O-[(E)-caffeoyl]-shikimate + H2O = shikimate + (E)-caffeate + H(+). Its function is as follows. Esterase involved in the biosynthesis of lignin. Hydrolyzes caffeoylshikimate into caffeate and shikimate. Together with 4-coumarate--CoA ligase (4CL), acts on an alternative reaction for the formation of caffeoyl-CoA and bypasses the second reaction of shikimate O-hydroxycinnamoyltransferase (HST). Also accepts 4-coumaroylshikimate as substrate, but with lower activity. According to PubMed:20345607 and PubMed:22915575, possesses monoacylglycerol O-acyltransferase, monoacylglycerol lipase and lysophospholipase activities in vitro. With the association of ACBP2, may promote the degradation of lysophosphatidylcholine and detoxify the peroxidized membrane in response to cadmium-induced oxidative stress. However these results require additional confirmation in vivo. This is Caffeoylshikimate esterase (CSE) from Arabidopsis thaliana (Mouse-ear cress).